The sequence spans 375 residues: Probable pectin lyase C (375 aa).

The signal sequence occupies residues 1-20 (MKITSTIPAVLLGLAPLSAA). Intrachain disulfides connect C83-C100 and C92-C220. R250 is a catalytic residue. C317 and C325 are joined by a disulfide.

The protein belongs to the polysaccharide lyase 1 family.

The protein resides in the secreted. The enzyme catalyses Eliminative cleavage of (1-&gt;4)-alpha-D-galacturonan methyl ester to give oligosaccharides with 4-deoxy-6-O-methyl-alpha-D-galact-4-enuronosyl groups at their non-reducing ends.. Functionally, pectinolytic enzymes consist of four classes of enzymes: pectin lyase, polygalacturonase, pectin methylesterase and rhamnogalacturonase. Among pectinolytic enzymes, pectin lyase is the most important in depolymerization of pectin, since it cleaves internal glycosidic bonds of highly methylated pectins. This Aspergillus oryzae (strain ATCC 42149 / RIB 40) (Yellow koji mold) protein is Probable pectin lyase C (pelC).